Reading from the N-terminus, the 323-residue chain is MADDFAYLNARVRVRRGTLLKESFFQEALDLSFADFLRLLSETVYGGELAGQGLPDVDRAVLRTQAKLVGDLPRLVTGEAREAVRLLLLRNDLHNLQALLRAKATGRPFEEVLLLPGTLREEVWRQAYEAQDPAGMAQVLAVPGHPLARALRAVLRETQDLARVEALLAKRFFEDVAKAAKGLDQPALRDYLALEVDAENLRTAFKLQGSGLAPDAFFLKGGRFVDRVRFARLMEGDYAVLDELSGTPFSGLSGVRDLRALERGLRCVLLKEAKKGVQDPLGVGLVLAYVKEREWEAVRLRLLARRAYFGLPRAQVEEEVVCP.

The protein belongs to the V-ATPase V0D/AC39 subunit family.

In terms of biological role, produces ATP from ADP in the presence of a proton gradient across the membrane. This is V-type ATP synthase subunit C from Thermus thermophilus (strain ATCC BAA-163 / DSM 7039 / HB27).